Consider the following 195-residue polypeptide: Flavin prenyltransferase UbiX (195 aa).

FMN is bound by residues 17–19, Ser-43, 94–97, and Arg-129; these read GGS and SAGT. Residues Tyr-159 and Arg-175 each contribute to the dimethylallyl phosphate site.

This sequence belongs to the UbiX/PAD1 family.

The enzyme catalyses dimethylallyl phosphate + FMNH2 = prenylated FMNH2 + phosphate. Functionally, flavin prenyltransferase that catalyzes the synthesis of the prenylated FMN cofactor (prenyl-FMN) for 4-hydroxy-3-polyprenylbenzoic acid decarboxylase UbiD. The prenyltransferase is metal-independent and links a dimethylallyl moiety from dimethylallyl monophosphate (DMAP) to the flavin N5 and C6 atoms of FMN. This is Flavin prenyltransferase UbiX from Deinococcus radiodurans (strain ATCC 13939 / DSM 20539 / JCM 16871 / CCUG 27074 / LMG 4051 / NBRC 15346 / NCIMB 9279 / VKM B-1422 / R1).